A 319-amino-acid chain; its full sequence is Ribonucleoside-diphosphate reductase 2 subunit beta (319 aa).

Fe cation-binding residues include Asp67, Glu98, and His101. Tyr105 is a catalytic residue. Fe cation is bound by residues Glu158, Glu192, and His195.

The protein belongs to the ribonucleoside diphosphate reductase small chain family. As to quaternary structure, tetramer of two alpha and two beta subunits. The cofactor is Fe cation.

The catalysed reaction is a 2'-deoxyribonucleoside 5'-diphosphate + [thioredoxin]-disulfide + H2O = a ribonucleoside 5'-diphosphate + [thioredoxin]-dithiol. Its function is as follows. Provides the precursors necessary for DNA synthesis. Catalyzes the biosynthesis of deoxyribonucleotides from the corresponding ribonucleotides. R2F contains the tyrosyl radical required for catalysis. The polypeptide is Ribonucleoside-diphosphate reductase 2 subunit beta (nrdF) (Salmonella typhimurium (strain LT2 / SGSC1412 / ATCC 700720)).